The chain runs to 860 residues: Glucans biosynthesis glucosyltransferase H (860 aa).

6 consecutive transmembrane segments (helical) span residues 146–166 (ILLI…KGIL), 200–220 (ILLL…TALM), 519–539 (VFLT…FLVL), 576–596 (LFST…ILIW), 610–630 (TVSM…RMLF), and 686–706 (FLWW…VSVI).

This sequence belongs to the glycosyltransferase 2 family. OpgH subfamily.

It is found in the cell inner membrane. Its pathway is glycan metabolism; osmoregulated periplasmic glucan (OPG) biosynthesis. Its function is as follows. Involved in the biosynthesis of osmoregulated periplasmic glucans (OPGs). The polypeptide is Glucans biosynthesis glucosyltransferase H (Pseudomonas savastanoi pv. phaseolicola (strain 1448A / Race 6) (Pseudomonas syringae pv. phaseolicola (strain 1448A / Race 6))).